A 484-amino-acid polypeptide reads, in one-letter code: Major extracellular endoglucanase (484 aa).

The N-terminal stretch at M1–S25 is a signal peptide. E182 (proton donor) is an active-site residue. E303 (nucleophile) is an active-site residue. The interval G370–S402 is disordered. The segment at T375–P399 is thr-Pro repeats ('hinge') (Pro-Thr box). Over residues T378–T398 the composition is skewed to pro residues. The region spanning P395 to S484 is the CBM2 domain.

This sequence belongs to the glycosyl hydrolase 5 (cellulase A) family.

It carries out the reaction Endohydrolysis of (1-&gt;4)-beta-D-glucosidic linkages in cellulose, lichenin and cereal beta-D-glucans.. This chain is Major extracellular endoglucanase (engXCA), found in Xanthomonas campestris pv. campestris (strain ATCC 33913 / DSM 3586 / NCPPB 528 / LMG 568 / P 25).